The chain runs to 901 residues: Protein translocase subunit SecA (901 aa).

ATP is bound by residues glutamine 87, 105–109 (GEGKT), and aspartate 512. Residues 868 to 901 (AALAAQTGERKVGRNDPCPCGSGKKYKQCHGRLQ) form a disordered region. Cysteine 885, cysteine 887, cysteine 896, and histidine 897 together coordinate Zn(2+). A compositionally biased stretch (basic residues) spans 891–901 (KKYKQCHGRLQ).

It belongs to the SecA family. In terms of assembly, monomer and homodimer. Part of the essential Sec protein translocation apparatus which comprises SecA, SecYEG and auxiliary proteins SecDF-YajC and YidC. Zn(2+) serves as cofactor.

The protein localises to the cell inner membrane. The protein resides in the cytoplasm. It carries out the reaction ATP + H2O + cellular proteinSide 1 = ADP + phosphate + cellular proteinSide 2.. In terms of biological role, part of the Sec protein translocase complex. Interacts with the SecYEG preprotein conducting channel. Has a central role in coupling the hydrolysis of ATP to the transfer of proteins into and across the cell membrane, serving both as a receptor for the preprotein-SecB complex and as an ATP-driven molecular motor driving the stepwise translocation of polypeptide chains across the membrane. The protein is Protein translocase subunit SecA of Escherichia coli O45:K1 (strain S88 / ExPEC).